We begin with the raw amino-acid sequence, 371 residues long: O-antigen chain mannosyltransferase C (371 aa).

It belongs to the glycosyltransferase group 1 family. Glycosyltransferase 4 subfamily.

The catalysed reaction is N-acetyl-alpha-D-glucosaminyl-di-trans,octa-cis-undecaprenyl diphosphate + GDP-alpha-D-mannose = alpha-D-mannosyl-(1-&gt;3)-N-acetyl-alpha-D-glucosaminyl-di-trans,octa-cis-undecaprenyl diphosphate + GDP + H(+). It participates in bacterial outer membrane biogenesis; LPS O-antigen biosynthesis. Mannosyltransferase involved in the biosynthesis of the repeat unit of the lipopolysaccharide (LPS) O-antigen region. Catalyzes the transfer of a single alpha-(1-&gt;3)-linked mannose residue to the acceptor N-acetyl-glucosaminyl-diphospho-undecaprenol during the synthesis of the adapter region. The chain is O-antigen chain mannosyltransferase C from Escherichia coli.